A 394-amino-acid chain; its full sequence is Elongation factor Tu 2 (394 aa).

Residues 10–204 (KPHVNVGTIG…ALDSYIPEPE (195 aa)) form the tr-type G domain. Residues 19 to 26 (GHVDHGKT) are G1. 19 to 26 (GHVDHGKT) serves as a coordination point for GTP. Residue Thr-26 coordinates Mg(2+). Positions 60-64 (GITIS) are G2. Residues 81–84 (DCPG) are G3. GTP-binding positions include 81-85 (DCPGH) and 136-139 (NKCD). The interval 136–139 (NKCD) is G4. The interval 174-176 (SAL) is G5.

The protein belongs to the TRAFAC class translation factor GTPase superfamily. Classic translation factor GTPase family. EF-Tu/EF-1A subfamily. In terms of assembly, monomer.

Its subcellular location is the cytoplasm. The enzyme catalyses GTP + H2O = GDP + phosphate + H(+). Functionally, GTP hydrolase that promotes the GTP-dependent binding of aminoacyl-tRNA to the A-site of ribosomes during protein biosynthesis. The chain is Elongation factor Tu 2 from Pseudoalteromonas translucida (strain TAC 125).